A 131-amino-acid polypeptide reads, in one-letter code: Aspartate 1-decarboxylase (131 aa).

The active-site Schiff-base intermediate with substrate; via pyruvic acid is Ser25. Pyruvic acid (Ser) is present on Ser25. Thr57 contributes to the substrate binding site. Residue Tyr58 is the Proton donor of the active site. 73–75 contacts substrate; sequence GAA.

It belongs to the PanD family. Heterooctamer of four alpha and four beta subunits. Pyruvate serves as cofactor. Post-translationally, is synthesized initially as an inactive proenzyme, which is activated by self-cleavage at a specific serine bond to produce a beta-subunit with a hydroxyl group at its C-terminus and an alpha-subunit with a pyruvoyl group at its N-terminus.

It localises to the cytoplasm. It carries out the reaction L-aspartate + H(+) = beta-alanine + CO2. The protein operates within cofactor biosynthesis; (R)-pantothenate biosynthesis; beta-alanine from L-aspartate: step 1/1. Functionally, catalyzes the pyruvoyl-dependent decarboxylation of aspartate to produce beta-alanine. The chain is Aspartate 1-decarboxylase from Anaeromyxobacter sp. (strain K).